A 52-amino-acid polypeptide reads, in one-letter code: Ribosome biogenesis protein Nop10 (52 aa).

This sequence belongs to the NOP10 family.

Involved in ribosome biogenesis; more specifically in 18S rRNA pseudouridylation and in cleavage of pre-rRNA. The protein is Ribosome biogenesis protein Nop10 of Methanococcus vannielii (strain ATCC 35089 / DSM 1224 / JCM 13029 / OCM 148 / SB).